A 146-amino-acid chain; its full sequence is Vascular endothelial growth factor A (146 aa).

A signal peptide spans 1–26; sequence MNFLLSWVHWSLALLLYLHHAKWSQA. 3 disulfide bridges follow: Cys-51-Cys-93, Cys-82-Cys-127, and Cys-86-Cys-129. Residue Asn-100 is glycosylated (N-linked (GlcNAc...) asparagine).

It belongs to the PDGF/VEGF growth factor family. In terms of assembly, homodimer; disulfide-linked. Also found as heterodimer with PGF. Interacts with NRP1. Interacts with isoform 2 of BSG. Interacts with CD82; this interaction inhibits VEGFA-mediated signaling pathway.

Growth factor active in angiogenesis, vasculogenesis and endothelial cell growth. Induces endothelial cell proliferation, promotes cell migration, inhibits apoptosis and induces permeabilization of blood vessels. Binds to the FLT1/VEGFR1 and KDR/VEGFR2 receptors, heparan sulfate and heparin. Binding to NRP1 receptor initiates a signaling pathway needed for motor neuron axon guidance and cell body migration, including for the caudal migration of facial motor neurons from rhombomere 4 to rhombomere 6 during embryonic development. Also binds the DEAR/FBXW7-AS1 receptor. This is Vascular endothelial growth factor A (VEGFA) from Ovis aries (Sheep).